Here is a 427-residue protein sequence, read N- to C-terminus: Mitochondrial distribution and morphology protein 10 (427 aa).

A compositionally biased stretch (low complexity) spans 393-414; sequence SSYANSQATAGAQGSSGGPPTS. The interval 393–427 is disordered; it reads SSYANSQATAGAQGSSGGPPTSYWRGVGVSVSYSS.

The protein belongs to the MDM10 family. As to quaternary structure, component of the ER-mitochondria encounter structure (ERMES) or MDM complex, composed of mmm1, mdm10, mdm12 and mdm34. Associates with the mitochondrial outer membrane sorting assembly machinery SAM(core) complex.

It is found in the mitochondrion outer membrane. Component of the ERMES/MDM complex, which serves as a molecular tether to connect the endoplasmic reticulum and mitochondria. Components of this complex are involved in the control of mitochondrial shape and protein biogenesis and may function in phospholipid exchange. mdm10 is involved in the late assembly steps of the general translocase of the mitochondrial outer membrane (TOM complex). Functions in the tom40-specific route of the assembly of outer membrane beta-barrel proteins, including the association of tom40 with the receptor tom22 and small TOM proteins. Can associate with the SAM(core) complex as well as the mdm12-mmm1 complex, both involved in late steps of the major beta-barrel assembly pathway, that is responsible for biogenesis of all outer membrane beta-barrel proteins. May act as a switch that shuttles between both complexes and channels precursor proteins into the tom40-specific pathway. Plays a role in mitochondrial morphology and in the inheritance of mitochondria. The polypeptide is Mitochondrial distribution and morphology protein 10 (mdmB) (Emericella nidulans (strain FGSC A4 / ATCC 38163 / CBS 112.46 / NRRL 194 / M139) (Aspergillus nidulans)).